A 300-amino-acid chain; its full sequence is Acetyl-coenzyme A carboxylase carboxyl transferase subunit beta 2 (300 aa).

A CoA carboxyltransferase N-terminal domain is found at 26–294 (VWVKCPSCRE…SGAYSSEAVA (269 aa)). Positions 30, 33, 49, and 51 each coordinate Zn(2+). A C4-type zinc finger spans residues 30–51 (CPSCRELIYHKQLAERMKVCRC).

The protein belongs to the AccD/PCCB family. As to quaternary structure, acetyl-CoA carboxylase is a heterohexamer composed of biotin carboxyl carrier protein (AccB), biotin carboxylase (AccC) and two subunits each of ACCase subunit alpha (AccA) and ACCase subunit beta (AccD). Requires Zn(2+) as cofactor.

Its subcellular location is the cytoplasm. It carries out the reaction N(6)-carboxybiotinyl-L-lysyl-[protein] + acetyl-CoA = N(6)-biotinyl-L-lysyl-[protein] + malonyl-CoA. It participates in lipid metabolism; malonyl-CoA biosynthesis; malonyl-CoA from acetyl-CoA: step 1/1. Functionally, component of the acetyl coenzyme A carboxylase (ACC) complex. Biotin carboxylase (BC) catalyzes the carboxylation of biotin on its carrier protein (BCCP) and then the CO(2) group is transferred by the transcarboxylase to acetyl-CoA to form malonyl-CoA. The protein is Acetyl-coenzyme A carboxylase carboxyl transferase subunit beta 2 of Roseiflexus castenholzii (strain DSM 13941 / HLO8).